A 327-amino-acid polypeptide reads, in one-letter code: Glutaminase (327 aa).

Substrate is bound by residues Ser92, Asn143, Asn195, Tyr218, Tyr263, and Val281.

It belongs to the glutaminase family. In terms of assembly, homotetramer.

The catalysed reaction is L-glutamine + H2O = L-glutamate + NH4(+). This Synechocystis sp. (strain ATCC 27184 / PCC 6803 / Kazusa) protein is Glutaminase.